The chain runs to 610 residues: ESX-5 secretion system protein EccA5 (610 aa).

357–364 (GPPGTGKT) contacts ATP.

The protein belongs to the CbxX/CfxQ family. Part of the ESX-5 / type VII secretion system (T7SS), which is composed of cytosolic and membrane components.

It localises to the cytoplasm. Its function is as follows. Part of an ESX-5 / type VII specialized secretion system (T7SS), which exports several proteins. EccA5 exhibits ATPase activity and may provide energy for the export of ESX-5 substrates. This Mycobacterium bovis (strain ATCC BAA-935 / AF2122/97) protein is ESX-5 secretion system protein EccA5.